The chain runs to 151 residues: tRNA-specific adenosine deaminase (151 aa).

The region spanning 4 to 122 (NRDSYWMKIA…PFLKKIFINL (119 aa)) is the CMP/dCMP-type deaminase domain. Position 55 (histidine 55) interacts with Zn(2+). The Proton donor role is filled by glutamate 57. Cysteine 85 and cysteine 88 together coordinate Zn(2+).

This sequence belongs to the cytidine and deoxycytidylate deaminase family. As to quaternary structure, homodimer. Requires Zn(2+) as cofactor.

It carries out the reaction adenosine(34) in tRNA + H2O + H(+) = inosine(34) in tRNA + NH4(+). Its function is as follows. Catalyzes the deamination of adenosine to inosine at the wobble position 34 of tRNA(Arg2). In Buchnera aphidicola subsp. Schizaphis graminum (strain Sg), this protein is tRNA-specific adenosine deaminase.